The following is a 295-amino-acid chain: sn-glycerol-3-phosphate transport system permease protein UgpA (295 aa).

The Cytoplasmic segment spans residues 1–11; sequence MSSSRPVFRSR. A helical transmembrane segment spans residues 12–32; the sequence is WLPYLLVAPQLIITVIFFIWP. At 33–80 the chain is on the periplasmic side; the sequence is AGEALWYSLQSVDPFGFSSQFVGLDNFVTLFHDSYYLDSFWTTIKFST. Residues 76-284 enclose the ABC transmembrane type-1 domain; it reads IKFSTFVTVS…FLVIVLTVVQ (209 aa). Residues 81-101 traverse the membrane as a helical segment; the sequence is FVTVSGLLVSLFFAALVEYIV. The Cytoplasmic segment spans residues 102–109; sequence RGSRFYQT. A helical transmembrane segment spans residues 110–130; the sequence is LMLLPYAVAPAVAAVLWIFLF. Residues 131–156 lie on the Periplasmic side of the membrane; the sequence is NPGRGLITHFLAEFGYDWNHAQNSGQ. The chain crosses the membrane as a helical span at residues 157 to 177; that stretch reads AMFLVVFASVWKQISYNFLFF. Residues 178–207 lie on the Cytoplasmic side of the membrane; the sequence is YAALQSIPRSLIEAAAIDGAGPIRRFFKIA. Residues 208–228 form a helical membrane-spanning segment; the sequence is LPLIAPVSFFLLVVNLVYAFF. The Periplasmic segment spans residues 229–262; sequence DTFPVIDAATSGGPVQATTTLIYKIYREGFTGLD. A helical membrane pass occupies residues 263-283; it reads LASSAAQSMVLMFLVIVLTVV. Topologically, residues 284 to 295 are cytoplasmic; that stretch reads QFRYVESKVRYQ.

It belongs to the binding-protein-dependent transport system permease family. UgpAE subfamily. As to quaternary structure, the complex is composed of two ATP-binding proteins (UgpC), two transmembrane proteins (UgpA and UgpE) and a solute-binding protein (UgpB).

The protein resides in the cell inner membrane. Part of the ABC transporter complex UgpBAEC involved in sn-glycerol-3-phosphate (G3P) import. Probably responsible for the translocation of the substrate across the membrane. The polypeptide is sn-glycerol-3-phosphate transport system permease protein UgpA (ugpA) (Shigella flexneri).